We begin with the raw amino-acid sequence, 149 residues long: D-aminoacyl-tRNA deacylase (149 aa).

Positions G137 to P138 match the Gly-cisPro motif, important for rejection of L-amino acids motif.

It belongs to the DTD family. In terms of assembly, homodimer.

The protein localises to the cytoplasm. It carries out the reaction glycyl-tRNA(Ala) + H2O = tRNA(Ala) + glycine + H(+). It catalyses the reaction a D-aminoacyl-tRNA + H2O = a tRNA + a D-alpha-amino acid + H(+). An aminoacyl-tRNA editing enzyme that deacylates mischarged D-aminoacyl-tRNAs. Also deacylates mischarged glycyl-tRNA(Ala), protecting cells against glycine mischarging by AlaRS. Acts via tRNA-based rather than protein-based catalysis; rejects L-amino acids rather than detecting D-amino acids in the active site. By recycling D-aminoacyl-tRNA to D-amino acids and free tRNA molecules, this enzyme counteracts the toxicity associated with the formation of D-aminoacyl-tRNA entities in vivo and helps enforce protein L-homochirality. The protein is D-aminoacyl-tRNA deacylase of Caldicellulosiruptor saccharolyticus (strain ATCC 43494 / DSM 8903 / Tp8T 6331).